The primary structure comprises 167 residues: Signal peptidase complex catalytic subunit SEC11 (167 aa).

The Cytoplasmic portion of the chain corresponds to 1–9 (MNLRFELQK). Residues 10-30 (LLNVCFLFASAYMFWQGLAIA) form a helical; Signal-anchor for type II membrane protein membrane-spanning segment. The Lumenal portion of the chain corresponds to 31-167 (TNSASPIVVV…LGLSALLGGE (137 aa)). Residues Ser-44, His-83, and Asp-109 each act as charge relay system in the active site. An N-linked (GlcNAc...) asparagine glycan is attached at Asn-121. The tract at residues 153–164 (ALLGMLGLSALL) is C-terminal short (CTS) helix.

This sequence belongs to the peptidase S26B family. In terms of assembly, component of the signal peptidase complex (SPC) composed of a catalytic subunit SEC11 and three accessory subunits SPC1, SPC2 and SPC3. The complex induces a local thinning of the ER membrane which is used to measure the length of the signal peptide (SP) h-region of protein substrates. This ensures the selectivity of the complex towards h-regions shorter than 18-20 amino acids. SPC associates with the translocon complex.

The protein resides in the endoplasmic reticulum membrane. It catalyses the reaction Cleavage of hydrophobic, N-terminal signal or leader sequences from secreted and periplasmic proteins.. Functionally, catalytic component of the signal peptidase complex (SPC) which catalyzes the cleavage of N-terminal signal sequences from nascent proteins as they are translocated into the lumen of the endoplasmic reticulum. Specifically cleaves N-terminal signal peptides that contain a hydrophobic alpha-helix (h-region) shorter than 18-20 amino acids. The sequence is that of Signal peptidase complex catalytic subunit SEC11 (SEC11) from Saccharomyces cerevisiae (strain Lalvin QA23) (Baker's yeast).